We begin with the raw amino-acid sequence, 267 residues long: L-aspartate dehydrogenase (267 aa).

2 residues coordinate NAD(+): A124 and N190. H218 is a catalytic residue.

The protein belongs to the L-aspartate dehydrogenase family.

The catalysed reaction is L-aspartate + NADP(+) + H2O = oxaloacetate + NH4(+) + NADPH + H(+). It carries out the reaction L-aspartate + NAD(+) + H2O = oxaloacetate + NH4(+) + NADH + H(+). The protein operates within cofactor biosynthesis; NAD(+) biosynthesis; iminoaspartate from L-aspartate (dehydrogenase route): step 1/1. Functionally, specifically catalyzes the NAD or NADP-dependent dehydrogenation of L-aspartate to iminoaspartate. The protein is L-aspartate dehydrogenase of Methanococcus maripaludis (strain C7 / ATCC BAA-1331).